The following is a 113-amino-acid chain: Large ribosomal subunit protein eL31 (113 aa).

Belongs to the eukaryotic ribosomal protein eL31 family.

The chain is Large ribosomal subunit protein eL31 (RPL31) from Candida glabrata (strain ATCC 2001 / BCRC 20586 / JCM 3761 / NBRC 0622 / NRRL Y-65 / CBS 138) (Yeast).